Here is a 276-residue protein sequence, read N- to C-terminus: Bis(5'-nucleosyl)-tetraphosphatase, symmetrical (276 aa).

Belongs to the Ap4A hydrolase family.

It carries out the reaction P(1),P(4)-bis(5'-adenosyl) tetraphosphate + H2O = 2 ADP + 2 H(+). In terms of biological role, hydrolyzes diadenosine 5',5'''-P1,P4-tetraphosphate to yield ADP. The protein is Bis(5'-nucleosyl)-tetraphosphatase, symmetrical of Legionella pneumophila (strain Lens).